The chain runs to 51 residues: Large ribosomal subunit protein bL33 (51 aa).

The interval 1–21 (MRDKIKLESGAGTGHFYTTTK) is disordered.

This sequence belongs to the bacterial ribosomal protein bL33 family.

This is Large ribosomal subunit protein bL33 from Neisseria gonorrhoeae (strain ATCC 700825 / FA 1090).